A 127-amino-acid chain; its full sequence is Aspartate 1-decarboxylase (127 aa).

The active-site Schiff-base intermediate with substrate; via pyruvic acid is serine 25. Residue serine 25 is modified to Pyruvic acid (Ser). Threonine 57 is a binding site for substrate. Tyrosine 58 serves as the catalytic Proton donor. 73 to 75 contributes to the substrate binding site; sequence GAA.

It belongs to the PanD family. In terms of assembly, heterooctamer of four alpha and four beta subunits. Pyruvate serves as cofactor. In terms of processing, is synthesized initially as an inactive proenzyme, which is activated by self-cleavage at a specific serine bond to produce a beta-subunit with a hydroxyl group at its C-terminus and an alpha-subunit with a pyruvoyl group at its N-terminus.

Its subcellular location is the cytoplasm. It carries out the reaction L-aspartate + H(+) = beta-alanine + CO2. The protein operates within cofactor biosynthesis; (R)-pantothenate biosynthesis; beta-alanine from L-aspartate: step 1/1. Its function is as follows. Catalyzes the pyruvoyl-dependent decarboxylation of aspartate to produce beta-alanine. The protein is Aspartate 1-decarboxylase of Bacillus cereus (strain ATCC 10987 / NRS 248).